Reading from the N-terminus, the 321-residue chain is Lipoyl synthase (321 aa).

Residues cysteine 68, cysteine 73, cysteine 79, cysteine 94, cysteine 98, cysteine 101, and serine 308 each coordinate [4Fe-4S] cluster. Residues 80-297 (FNHGTATFMI…REFAESIGFT (218 aa)) form the Radical SAM core domain.

This sequence belongs to the radical SAM superfamily. Lipoyl synthase family. The cofactor is [4Fe-4S] cluster.

Its subcellular location is the cytoplasm. It catalyses the reaction [[Fe-S] cluster scaffold protein carrying a second [4Fe-4S](2+) cluster] + N(6)-octanoyl-L-lysyl-[protein] + 2 oxidized [2Fe-2S]-[ferredoxin] + 2 S-adenosyl-L-methionine + 4 H(+) = [[Fe-S] cluster scaffold protein] + N(6)-[(R)-dihydrolipoyl]-L-lysyl-[protein] + 4 Fe(3+) + 2 hydrogen sulfide + 2 5'-deoxyadenosine + 2 L-methionine + 2 reduced [2Fe-2S]-[ferredoxin]. The protein operates within protein modification; protein lipoylation via endogenous pathway; protein N(6)-(lipoyl)lysine from octanoyl-[acyl-carrier-protein]: step 2/2. Its function is as follows. Catalyzes the radical-mediated insertion of two sulfur atoms into the C-6 and C-8 positions of the octanoyl moiety bound to the lipoyl domains of lipoate-dependent enzymes, thereby converting the octanoylated domains into lipoylated derivatives. This is Lipoyl synthase from Shewanella sediminis (strain HAW-EB3).